The chain runs to 90 residues: DNA-binding protein HU-1 (90 aa).

T4 carries the phosphothreonine modification.

It belongs to the bacterial histone-like protein family. As to quaternary structure, homodimer.

In terms of biological role, histone-like DNA-binding protein which is capable of wrapping DNA to stabilize it, and thus to prevent its denaturation under extreme environmental conditions. The polypeptide is DNA-binding protein HU-1 (hup2) (Halalkalibacterium halodurans (strain ATCC BAA-125 / DSM 18197 / FERM 7344 / JCM 9153 / C-125) (Bacillus halodurans)).